Consider the following 375-residue polypeptide: Chaperone protein DnaJ (375 aa).

Residues 5–70 (DYYEVLGVNR…QKKGAYDRYG (66 aa)) enclose the J domain. Residues 134 to 212 (GAEKTIRIPT…CGGAGRVKKQ (79 aa)) form a CR-type zinc finger. Residues C147, C150, C164, C167, C186, C189, C200, and C203 each coordinate Zn(2+). CXXCXGXG motif repeat units lie at residues 147-154 (CGTCHGSG), 164-171 (CPTCGGAG), 186-193 (CPKCHGTG), and 200-207 (CGDCGGAG).

The protein belongs to the DnaJ family. Homodimer. It depends on Zn(2+) as a cofactor.

The protein resides in the cytoplasm. In terms of biological role, participates actively in the response to hyperosmotic and heat shock by preventing the aggregation of stress-denatured proteins and by disaggregating proteins, also in an autonomous, DnaK-independent fashion. Unfolded proteins bind initially to DnaJ; upon interaction with the DnaJ-bound protein, DnaK hydrolyzes its bound ATP, resulting in the formation of a stable complex. GrpE releases ADP from DnaK; ATP binding to DnaK triggers the release of the substrate protein, thus completing the reaction cycle. Several rounds of ATP-dependent interactions between DnaJ, DnaK and GrpE are required for fully efficient folding. Also involved, together with DnaK and GrpE, in the DNA replication of plasmids through activation of initiation proteins. The sequence is that of Chaperone protein DnaJ from Azoarcus sp. (strain BH72).